A 72-amino-acid polypeptide reads, in one-letter code: DNA-directed RNA polymerase subunit omega (72 aa).

It belongs to the RNA polymerase subunit omega family. In terms of assembly, the RNAP catalytic core consists of 2 alpha, 1 beta, 1 beta' and 1 omega subunit. When a sigma factor is associated with the core the holoenzyme is formed, which can initiate transcription.

The catalysed reaction is RNA(n) + a ribonucleoside 5'-triphosphate = RNA(n+1) + diphosphate. In terms of biological role, promotes RNA polymerase assembly. Latches the N- and C-terminal regions of the beta' subunit thereby facilitating its interaction with the beta and alpha subunits. This Francisella tularensis subsp. holarctica (strain LVS) protein is DNA-directed RNA polymerase subunit omega.